Reading from the N-terminus, the 1342-residue chain is MVYSYTEKKRIRKDFGTRPQVLDIPYLLSIQLDSFDKFIEQDPEGQYGLEAAFRSVFPIQSYNGNSELQYVSYRLGEPVFDVKECQIRGVTYSKPLRVKLRLVIFDKDAPAGTVKDIKEQEVYMGEIPLMTDNGTFVINGTERVIVSQLHRSPGVFFDSDKGKTHSSGKVLYNARVIPYRGSWLDFEFDPKDNLYVRIDRRRKLPASIILRALGKSTEEILDIFFEKVNFEVKDQTLLMELVPDRLRGETASFDIESNGKVYVEQGRRVTARHIRQLEKDGVDHIEVPVEYIVGKVASKDYINEATGEIIVNANQEISLEALANLSQAGHKALEVLFTNDLDHGPFMSETLRIDSTVDRISALVEIYRMMRPGEPPTKEAAEALFESLFFSEERYDLSTVGRMKFNSSIGREDAQEQGTLDETDIIEVMKKLIAIRNGKGEVDDIDHLGNRRIRSVGEMAENQFRVGLVRVERAVKERLSLGDLDAVMPQDLINAKPISAAVKEFFGSSQLSQFMDQNNPLSEVTHKRRISALGPGGLTRERAGFEVRDVHVTHYGRLCPIETPEGPNIGLINSLSAFARCNEYGFLETPYRRVVDGVVTDEVDYLSAIEEGQFVIAQANAKLNEDGTFADELITARQKGESGLHPREHAQYMDVATNQVVSIAASLIPFLEHDDANRALMGANMQRQAVPTLKADKPLVGTGIERNVAVDSGVTAVAKRGGVIQSVDASRIVVKVNEEELVPGEAGIDIYNLTKYTRSNQNTCINQRPCVMPGEPVARGDVLADGPSTDLGELALGQNMRIAFMPWNGYNFEDSILVSERVVQEDRFTTIHIQELTCVARDTKLGSEEITADIPNVGESALSKLDESGIVYIGAEVKGGDILVGKVTPKGETQLTPEEKLLRAIFGEKASDVKDTSLRVPNSVSGTIIDVQVFTRDGVEKDKRALEIEQMQLKEAKKDLTEEFQILEGGLLNRVKAVLIEGGYSEAKLDATDRKKWLELTLEDDALQTQLEQLAEQWDELKADFDKKFETKRRKITQGDDLAPGVLKIVKVYLAVKRRIQPGDKMAGRHGNKGVISKINPVEDMPYDEKGQPVDIVLNPLGVPSRMNIGQILEVHLGLAAKGIGDKINQMVKEQQELAKFREFLQKVYDLGDTRQKVDIASLSDDEVRTLIKNLRGGLPIATPVFDGAPEASIKALLELADLPTSGQLTLFDGRTGDAFERPVTVGYMYMLKLNHLVDDKMHARSTGSYSLVTQQPLGGKAQFGGQRFGEMEVWALEAYGAAYTLQEMLTVKSDDVNGRTKMYKNIVDGNHSMEPGMPESFNVLLKEIRSLGINIELEDEE.

It belongs to the RNA polymerase beta chain family. As to quaternary structure, the RNAP catalytic core consists of 2 alpha, 1 beta, 1 beta' and 1 omega subunit. When a sigma factor is associated with the core the holoenzyme is formed, which can initiate transcription.

It catalyses the reaction RNA(n) + a ribonucleoside 5'-triphosphate = RNA(n+1) + diphosphate. Functionally, DNA-dependent RNA polymerase catalyzes the transcription of DNA into RNA using the four ribonucleoside triphosphates as substrates. The protein is DNA-directed RNA polymerase subunit beta of Vibrio parahaemolyticus serotype O3:K6 (strain RIMD 2210633).